The sequence spans 367 residues: Serine/threonine-protein phosphatase 2A activator 2 (367 aa).

The protein belongs to the PTPA-type PPIase family.

It is found in the cytoplasm. The enzyme catalyses [protein]-peptidylproline (omega=180) = [protein]-peptidylproline (omega=0). PPIases accelerate the folding of proteins. It catalyzes the cis-trans isomerization of proline imidic peptide bonds in oligopeptides. Acts as a regulatory subunit for PP2A-like phosphatases modulating their activity or substrate specificity, probably by inducing a conformational change in the catalytic subunit, a direct target of the PPIase. Can reactivate inactive phosphatase PP2A-phosphatase methylesterase complexes (PP2Ai) in presence of ATP and Mg(2+) by dissociating the inactive form from the complex. This is Serine/threonine-protein phosphatase 2A activator 2 (RRD2) from Debaryomyces hansenii (strain ATCC 36239 / CBS 767 / BCRC 21394 / JCM 1990 / NBRC 0083 / IGC 2968) (Yeast).